A 459-amino-acid chain; its full sequence is Proton-coupled folate transporter (459 aa).

At methionine 1 the chain carries N-acetylmethionine. Topologically, residues 1–25 are cytoplasmic; the sequence is MEGRANSPGEPRAWPTRSVLCRGCV. A helical transmembrane segment spans residues 26-44; sequence EPLVFLANFALVLQGPVTT. The Extracellular segment spans residues 45–82; sequence QYLWHRFSADLGYNGTRHRDSCSNHSVDPIAQEVETLT. N-linked (GlcNAc...) asparagine glycans are attached at residues asparagine 58 and asparagine 68. Cysteines 66 and 298 form a disulfide. Residues 83 to 108 traverse the membrane as a helical segment; sequence SHWTLYMNVGGFLVGLFSSTLLGAWS. At 109-112 the chain is on the cytoplasmic side; it reads DCVG. A helical membrane pass occupies residues 113 to 135; the sequence is RRPLLVLASLGLLLQTVLSIFVV. Residues 136–140 are Extracellular-facing; the sequence is QLHLH. Residues 141 to 154 form a helical membrane-spanning segment; it reads IGYLVLGRILCALL. At 155–177 the chain is on the cytoplasmic side; sequence GDFSGLLAASFASVADVSSSRTR. 2 residues coordinate H(+): aspartate 156 and glutamate 185. The chain crosses the membrane as a helical span at residues 178–203; that stretch reads TIRMALLEACIGVAGMLASFIGGFLL. At 204–208 the chain is on the extracellular side; it reads QEQVY. A helical membrane pass occupies residues 209–227; the sequence is VNPFWLALAVLTVMTLYAA. Residues 228-266 are Cytoplasmic-facing; that stretch reads FCFGETVKERTPTRLFTLRHHRSVIQLYVTQAPEKSRKH. Residues 267–289 form a helical membrane-spanning segment; that stretch reads LALYSLAIFVMITVHLGAQDILT. Histidine 281 provides a ligand contact to H(+). Over 290-302 the chain is Extracellular; sequence LYELSAPLCWDSR. Residues 303–325 form a helical membrane-spanning segment; sequence LISYGSAAQQLPYLTSLLGLRLL. Topologically, residues 326 to 331 are cytoplasmic; sequence QYCLAD. The helical transmembrane segment at 332-351 threads the bilayer; it reads TWVAEIGLVFNILGMMVFAF. Residues 352–355 lie on the Extracellular side of the membrane; sequence ATIT. A helical membrane pass occupies residues 356–376; sequence PLMFTGYGLLFLSLVVTPIIR. Over 377-388 the chain is Cytoplasmic; that stretch reads AKLSRLVRQSEQ. A helical transmembrane segment spans residues 389–414; it reads GALFSALACVNGLAMLMASGIFNSLY. At 415-422 the chain is on the extracellular side; sequence PATLNLMK. Residues 423–441 form a helical membrane-spanning segment; that stretch reads GFPFLLAAGLLFIPAILMG. The Cytoplasmic segment spans residues 442 to 459; the sequence is ILERDNHCPEFQEFSQSP. Serine 458 carries the phosphoserine modification.

It belongs to the major facilitator superfamily. SLC46A family. In terms of assembly, monomer. Expressed in retina and retinal pigment epithelium.

The protein resides in the cell membrane. It is found in the apical cell membrane. The protein localises to the basolateral cell membrane. It localises to the endosome membrane. Its subcellular location is the cytoplasm. The enzyme catalyses folate(in) + H(+)(in) = folate(out) + H(+)(out). It carries out the reaction (6S)-5-methyl-5,6,7,8-tetrahydrofolate(in) + H(+)(in) = (6S)-5-methyl-5,6,7,8-tetrahydrofolate(out) + H(+)(out). The catalysed reaction is methotrexate(in) + H(+)(in) = methotrexate(out) + H(+)(out). It catalyses the reaction pemetrexed(in) + H(+)(in) = pemetrexed(out) + H(+)(out). Its function is as follows. Proton-coupled folate symporter that mediates folate absorption using an H(+) gradient as a driving force. Involved in the intestinal absorption of folates at the brush-border membrane of the proximal jejunum, and the transport from blood to cerebrospinal fluid across the choroid plexus. Functions at acidic pH via alternate outward- and inward-open conformation states. Protonation of residues in the outward open state primes the protein for transport. Binding of folate promotes breaking of salt bridge network and subsequent closure of the extracellular gate, leading to the inward-open state and release of protons and folate. Also able to transport antifolate drugs, such as methotrexate and pemetrexed. Involved in FOLR1-mediated endocytosis by serving as a route of export of folates from acidified endosomes. Also acts as a lower-affinity, pH-independent heme carrier protein and constitutes the main importer of heme in the intestine. Imports heme in the retina and retinal pigment epithelium, in neurons of the hippocampus, in hepatocytes and in the renal epithelial cells. Hence, participates in the trafficking of heme and increases intracellular iron content. This Bos taurus (Bovine) protein is Proton-coupled folate transporter.